The chain runs to 353 residues: Phospho-N-acetylmuramoyl-pentapeptide-transferase (353 aa).

10 consecutive transmembrane segments (helical) span residues 24-44 (LGFFIAFFLTLFLMPKFILWA), 66-86 (TPTMGGIVFVFATIVASVLCA), 88-108 (LGNLYVLLGIIVLVGFSFVGF), 129-149 (FGMLFVLSLVVSVLLSLKGLD), 160-180 (PLFEMPTMLAVGFWVLVFLST), 192-212 (GLASVPSIFTLLSLSIFVYVA), 229-249 (VGELFVVSLALVGSLFGFLWY), 256-276 (VFMGDSGSLALGGFIAYNAIV), 281-301 (ILLVLMGSIFVVETLSVILQV), and 330-350 (KVIVRFWIISMLSNLVALLSL).

This sequence belongs to the glycosyltransferase 4 family. MraY subfamily. Mg(2+) is required as a cofactor.

Its subcellular location is the cell inner membrane. The enzyme catalyses UDP-N-acetyl-alpha-D-muramoyl-L-alanyl-gamma-D-glutamyl-meso-2,6-diaminopimeloyl-D-alanyl-D-alanine + di-trans,octa-cis-undecaprenyl phosphate = di-trans,octa-cis-undecaprenyl diphospho-N-acetyl-alpha-D-muramoyl-L-alanyl-D-glutamyl-meso-2,6-diaminopimeloyl-D-alanyl-D-alanine + UMP. The protein operates within cell wall biogenesis; peptidoglycan biosynthesis. Catalyzes the initial step of the lipid cycle reactions in the biosynthesis of the cell wall peptidoglycan: transfers peptidoglycan precursor phospho-MurNAc-pentapeptide from UDP-MurNAc-pentapeptide onto the lipid carrier undecaprenyl phosphate, yielding undecaprenyl-pyrophosphoryl-MurNAc-pentapeptide, known as lipid I. This chain is Phospho-N-acetylmuramoyl-pentapeptide-transferase, found in Helicobacter pylori (strain HPAG1).